A 149-amino-acid polypeptide reads, in one-letter code: UPF0179 protein MM_0589 (149 aa).

Belongs to the UPF0179 family.

The protein is UPF0179 protein MM_0589 of Methanosarcina mazei (strain ATCC BAA-159 / DSM 3647 / Goe1 / Go1 / JCM 11833 / OCM 88) (Methanosarcina frisia).